The following is a 512-amino-acid chain: MSSNSQEDNNKTTEKKNTLTVIDNRTGKSYEIPINHETVKSIDFRAIKEQSIDFGTMIYDPGYYNTAVCKSQITYIDGDRGILEYRGYPIEQLAEKSSFLEVSYLLIYGDLPSKEQSNLWNTKIMNHTFIHENLISMMKSFRYDAHPMGMLISSLSAMSTFYPEANPALAGVDIYKNKQLMNKQIFRILGKLPTIAACAYRHRIGRPYNDPSNTLSYTENFLYMLDRLSESNYKPHPVLTRALDKLFIIHADHELNCSTATMRQIASTLVDPYTACAGSAGALYGPLHGGANEAVLRMLEAIGTIENIPKFIEQVKQKKQRLMGFGHRVYKSYDPRAKILKTVTMEIFALLGKNPLMQIATELERLALSDSYFIERQLYPNVDFYSGIIYKSMGFPTDMFPVLFSIPRAAGWLAHWVEELADPELRIFRPRQIYMGRRNMNYVPMDARQVQQHNSGEKLSSFSSGFDRRRDVSEELFNFEDGAIPKTATGSKSQLSASIEQSFGEKISPQSH.

Active-site residues include histidine 288, histidine 327, and aspartate 383. The disordered stretch occupies residues 483-512 (AIPKTATGSKSQLSASIEQSFGEKISPQSH). The segment covering 488–501 (ATGSKSQLSASIEQ) has biased composition (polar residues).

Belongs to the citrate synthase family.

The protein localises to the cytoplasm. The enzyme catalyses oxaloacetate + acetyl-CoA + H2O = citrate + CoA + H(+). The protein operates within carbohydrate metabolism; tricarboxylic acid cycle; isocitrate from oxaloacetate: step 1/2. In Dictyostelium discoideum (Social amoeba), this protein is Citrate synthase (gltA).